Here is a 513-residue protein sequence, read N- to C-terminus: Na(+)/H(+) antiporter NhaB (513 aa).

Helical transmembrane passes span 23-43 (LALI…PFVA), 52-72 (IFTL…LLAI), 97-117 (LLLM…LFIF), 120-140 (LLLS…AAAF), 144-164 (FLDA…FYGI), 202-222 (LMMH…VGEP), 238-258 (FFLR…LTCL), 303-323 (AIIG…VGLI), 348-368 (TESL…AVII), 391-411 (LFYI…VGTI), 447-467 (ATPN…APLI), and 475-495 (VWMA…CVEF).

The protein belongs to the NhaB Na(+)/H(+) (TC 2.A.34) antiporter family.

It is found in the cell inner membrane. It catalyses the reaction 2 Na(+)(in) + 3 H(+)(out) = 2 Na(+)(out) + 3 H(+)(in). In terms of biological role, na(+)/H(+) antiporter that extrudes sodium in exchange for external protons. In Shigella boydii serotype 18 (strain CDC 3083-94 / BS512), this protein is Na(+)/H(+) antiporter NhaB.